The following is a 423-amino-acid chain: Acetylornithine aminotransferase, mitochondrial (423 aa).

The transit peptide at 1–13 directs the protein to the mitochondrion; it reads MFKRYLSSTSSRR. Residue Lys276 is modified to N6-(pyridoxal phosphate)lysine.

It belongs to the class-III pyridoxal-phosphate-dependent aminotransferase family. Pyridoxal 5'-phosphate is required as a cofactor.

The protein localises to the mitochondrion matrix. The catalysed reaction is N(2)-acetyl-L-ornithine + 2-oxoglutarate = N-acetyl-L-glutamate 5-semialdehyde + L-glutamate. The protein operates within amino-acid biosynthesis; L-arginine biosynthesis; N(2)-acetyl-L-ornithine from L-glutamate: step 4/4. Its function is as follows. catalyzes the conversion of N-acetylglutamate-gamma-semialdehyde (NAGSA) to N-acetylornithine in arginine biosynthesis. The protein is Acetylornithine aminotransferase, mitochondrial (ARG8) of Saccharomyces cerevisiae (strain ATCC 204508 / S288c) (Baker's yeast).